Consider the following 106-residue polypeptide: Urease subunit beta (106 aa).

Belongs to the urease beta subunit family. As to quaternary structure, heterotrimer of UreA (gamma), UreB (beta) and UreC (alpha) subunits. Three heterotrimers associate to form the active enzyme.

Its subcellular location is the cytoplasm. The enzyme catalyses urea + 2 H2O + H(+) = hydrogencarbonate + 2 NH4(+). It participates in nitrogen metabolism; urea degradation; CO(2) and NH(3) from urea (urease route): step 1/1. The chain is Urease subunit beta from Prochlorococcus marinus (strain NATL1A).